A 299-amino-acid chain; its full sequence is GDNF family receptor alpha-4 (299 aa).

The first 20 residues, 1–20 (MVRCLGPALLLLLLLGSASS), serve as a signal peptide directing secretion. The interval 145–198 (RGLSPAHRPPAAQASPPGLSGLVHPSAQRPRRLPAGPGRPLPARLRGPRGVPAG) is disordered. Low complexity predominate over residues 177–198 (LPAGPGRPLPARLRGPRGVPAG). The N-linked (GlcNAc...) asparagine glycan is linked to Asn208. Gly278 carries the GPI-anchor amidated glycine lipid modification. Residues 279–299 (RALERRSLLSILPVLALPALL) constitute a propeptide, removed in mature form.

Belongs to the GDNFR family. As to quaternary structure, interacts with ARTN ligand and RET: forms a 2:2:2 ternary complex composed of ARTN ligand, GFRA3 and RET receptor. Interacts with SORL1. Predominantly expressed in the adult thyroid gland. Low levels also found in fetal adrenal and thyroid glands.

Its subcellular location is the cell membrane. The protein localises to the secreted. Receptor for persephin (PSPN), a growth factor that exhibits neurotrophic activity on mesencephalic dopaminergic and motor neurons. Acts by binding to its coreceptor, GFRA4, leading to autophosphorylation and activation of the RET receptor. May be important in C-cell development and, in the postnatal development of the adrenal medulla. This chain is GDNF family receptor alpha-4 (GFRA4), found in Homo sapiens (Human).